The sequence spans 236 residues: Eukaryotic translation initiation factor 3 subunit J (236 aa).

2 disordered regions span residues 1–88 (MADD…LANM) and 188–236 (SEKQ…DDFM). Over residues 28 to 46 (GEDDDEDVKESWEDEEEKK) the composition is skewed to acidic residues. Composition is skewed to basic and acidic residues over residues 47 to 58 (DEEKPTKTEAPV), 68 to 88 (AKLE…LANM), and 188 to 197 (SEKQKMEKAN). 2 coiled-coil regions span residues 61–112 (KPNK…LKSA) and 174–209 (ADIK…KGKV). Over residues 201–210 (SAAKAKGKVS) the composition is skewed to basic residues.

It belongs to the eIF-3 subunit J family. Component of the eukaryotic translation initiation factor 3 (eIF-3) complex. The eIF-3 complex interacts with pix.

It is found in the cytoplasm. Component of the eukaryotic translation initiation factor 3 (eIF-3) complex, which is involved in protein synthesis of a specialized repertoire of mRNAs and, together with other initiation factors, stimulates binding of mRNA and methionyl-tRNAi to the 40S ribosome. The eIF-3 complex specifically targets and initiates translation of a subset of mRNAs involved in cell proliferation. This is Eukaryotic translation initiation factor 3 subunit J from Drosophila virilis (Fruit fly).